Here is a 208-residue protein sequence, read N- to C-terminus: Uracil phosphoribosyltransferase (208 aa).

5-phospho-alpha-D-ribose 1-diphosphate contacts are provided by residues Arg78, Arg103, and 130 to 138; that span reads DPMLATGGS. Uracil-binding positions include Ile193 and 198 to 200; that span reads GDA. Asp199 serves as a coordination point for 5-phospho-alpha-D-ribose 1-diphosphate.

Belongs to the UPRTase family. Mg(2+) serves as cofactor.

It catalyses the reaction UMP + diphosphate = 5-phospho-alpha-D-ribose 1-diphosphate + uracil. It functions in the pathway pyrimidine metabolism; UMP biosynthesis via salvage pathway; UMP from uracil: step 1/1. With respect to regulation, allosterically activated by GTP. In terms of biological role, catalyzes the conversion of uracil and 5-phospho-alpha-D-ribose 1-diphosphate (PRPP) to UMP and diphosphate. This chain is Uracil phosphoribosyltransferase, found in Vibrio parahaemolyticus serotype O3:K6 (strain RIMD 2210633).